The chain runs to 876 residues: Leucine--tRNA ligase (876 aa).

The 'HIGH' region motif lies at 43-53 (PYPSGRIHMGH). Residues 632–636 (KMSKS) carry the 'KMSKS' region motif. K635 is a binding site for ATP.

This sequence belongs to the class-I aminoacyl-tRNA synthetase family.

Its subcellular location is the cytoplasm. The enzyme catalyses tRNA(Leu) + L-leucine + ATP = L-leucyl-tRNA(Leu) + AMP + diphosphate. This is Leucine--tRNA ligase from Rhizobium etli (strain ATCC 51251 / DSM 11541 / JCM 21823 / NBRC 15573 / CFN 42).